A 71-amino-acid polypeptide reads, in one-letter code: Large ribosomal subunit protein uL29 (71 aa).

Belongs to the universal ribosomal protein uL29 family.

This chain is Large ribosomal subunit protein uL29, found in Methanococcus maripaludis (strain C7 / ATCC BAA-1331).